A 392-amino-acid chain; its full sequence is Phosphoglycerate kinase (392 aa).

Residues 21-23, Arg-36, 59-62, Arg-114, and Arg-147 contribute to the substrate site; these read DLN and HLGR. Residues Lys-198, Glu-320, and 346-349 contribute to the ATP site; that span reads GGDT.

Belongs to the phosphoglycerate kinase family. In terms of assembly, monomer.

The protein resides in the cytoplasm. It carries out the reaction (2R)-3-phosphoglycerate + ATP = (2R)-3-phospho-glyceroyl phosphate + ADP. Its pathway is carbohydrate degradation; glycolysis; pyruvate from D-glyceraldehyde 3-phosphate: step 2/5. The sequence is that of Phosphoglycerate kinase from Nitrosomonas europaea (strain ATCC 19718 / CIP 103999 / KCTC 2705 / NBRC 14298).